The primary structure comprises 129 residues: Large ribosomal subunit protein bL12 (129 aa).

The protein belongs to the bacterial ribosomal protein bL12 family. As to quaternary structure, homodimer. Part of the ribosomal stalk of the 50S ribosomal subunit. Forms a multimeric L10(L12)X complex, where L10 forms an elongated spine to which 2 to 4 L12 dimers bind in a sequential fashion. Binds GTP-bound translation factors.

Forms part of the ribosomal stalk which helps the ribosome interact with GTP-bound translation factors. Is thus essential for accurate translation. The protein is Large ribosomal subunit protein bL12 of Treponema denticola (strain ATCC 35405 / DSM 14222 / CIP 103919 / JCM 8153 / KCTC 15104).